Here is a 526-residue protein sequence, read N- to C-terminus: Berberine bridge enzyme-like 11 (526 aa).

The signal sequence occupies residues 1–21 (MEKLLIICMLLISVLVATSQS). Cysteine 31 and cysteine 94 form a disulfide bridge. Residues asparagine 52, asparagine 136, asparagine 273, and asparagine 482 are each glycosylated (N-linked (GlcNAc...) asparagine). The 176-residue stretch at 72–247 (TTPKPIAIIT…MGYKIRLVPV (176 aa)) folds into the FAD-binding PCMH-type domain. Positions 109–171 (HDFEGLSYTS…NVLGFPAGLC (63 aa)) form a cross-link, 6-(S-cysteinyl)-8alpha-(pros-histidyl)-FAD (His-Cys).

Belongs to the oxygen-dependent FAD-linked oxidoreductase family. FAD is required as a cofactor. The FAD cofactor is bound via a bicovalent 6-S-cysteinyl, 8alpha-N1-histidyl FAD linkage.

The protein resides in the secreted. The protein localises to the cell wall. The protein is Berberine bridge enzyme-like 11 of Arabidopsis thaliana (Mouse-ear cress).